A 476-amino-acid chain; its full sequence is 23S rRNA (uracil(1939)-C(5))-methyltransferase RlmD (476 aa).

Positions 1–55 (MVDEVLKIESLDLEARGIARRDGKVVFVEGALPGERVYAATVRRKPSYEIARVET) constitute a TRAM domain. [4Fe-4S] cluster is bound by residues C68, C74, C77, and C156. Residues Q265, F294, N299, E315, N343, and D364 each coordinate S-adenosyl-L-methionine. C394 functions as the Nucleophile in the catalytic mechanism.

The protein belongs to the class I-like SAM-binding methyltransferase superfamily. RNA M5U methyltransferase family. RlmD subfamily.

The enzyme catalyses uridine(1939) in 23S rRNA + S-adenosyl-L-methionine = 5-methyluridine(1939) in 23S rRNA + S-adenosyl-L-homocysteine + H(+). In terms of biological role, catalyzes the formation of 5-methyl-uridine at position 1939 (m5U1939) in 23S rRNA. This Bordetella avium (strain 197N) protein is 23S rRNA (uracil(1939)-C(5))-methyltransferase RlmD.